Here is a 447-residue protein sequence, read N- to C-terminus: Na(+)-translocating NADH-quinone reductase subunit A (447 aa).

This sequence belongs to the NqrA family. Composed of six subunits; NqrA, NqrB, NqrC, NqrD, NqrE and NqrF.

It catalyses the reaction a ubiquinone + n Na(+)(in) + NADH + H(+) = a ubiquinol + n Na(+)(out) + NAD(+). NQR complex catalyzes the reduction of ubiquinone-1 to ubiquinol by two successive reactions, coupled with the transport of Na(+) ions from the cytoplasm to the periplasm. NqrA to NqrE are probably involved in the second step, the conversion of ubisemiquinone to ubiquinol. This chain is Na(+)-translocating NADH-quinone reductase subunit A, found in Klebsiella pneumoniae (strain 342).